The following is a 446-amino-acid chain: Glucose-6-phosphate isomerase (446 aa).

Glutamate 287 serves as the catalytic Proton donor. Active-site residues include histidine 308 and lysine 422.

The protein belongs to the GPI family.

Its subcellular location is the cytoplasm. The catalysed reaction is alpha-D-glucose 6-phosphate = beta-D-fructose 6-phosphate. The protein operates within carbohydrate biosynthesis; gluconeogenesis. It functions in the pathway carbohydrate degradation; glycolysis; D-glyceraldehyde 3-phosphate and glycerone phosphate from D-glucose: step 2/4. Catalyzes the reversible isomerization of glucose-6-phosphate to fructose-6-phosphate. The sequence is that of Glucose-6-phosphate isomerase from Lactobacillus helveticus (strain DPC 4571).